The sequence spans 415 residues: Histidine--tRNA ligase (415 aa).

The protein belongs to the class-II aminoacyl-tRNA synthetase family. In terms of assembly, homodimer.

Its subcellular location is the cytoplasm. The enzyme catalyses tRNA(His) + L-histidine + ATP = L-histidyl-tRNA(His) + AMP + diphosphate + H(+). This is Histidine--tRNA ligase from Clostridium botulinum (strain Loch Maree / Type A3).